The sequence spans 63 residues: UPF0434 protein Mmar10_2939 (63 aa).

It belongs to the UPF0434 family.

This is UPF0434 protein Mmar10_2939 from Maricaulis maris (strain MCS10) (Caulobacter maris).